Here is a 129-residue protein sequence, read N- to C-terminus: Small ribosomal subunit protein uS9 (129 aa).

Residues 107-129 (SRTVERKKYGRRKARRSPQFSKR) are disordered. Over residues 114–129 (KYGRRKARRSPQFSKR) the composition is skewed to basic residues.

It belongs to the universal ribosomal protein uS9 family.

The polypeptide is Small ribosomal subunit protein uS9 (Campylobacter jejuni subsp. jejuni serotype O:23/36 (strain 81-176)).